The following is a 530-amino-acid chain: Cation transporter HKT2;1 (530 aa).

Residues 1-40 (MTSIYHDFIHNKLQSFGRIGRYFVNFVVLAHRFIALHIHP) are Cytoplasmic-facing. Transmembrane regions (helical) follow at residues 41-61 (FWIQLSYFLLISILGSVLLMF) and 102-122 (IVVITLLMLLGGEVFVSFLGL). Topologically, residues 123–186 (MLRLNHKHNP…DLKRSKRLRW (64 aa)) are cytoplasmic. Helical transmembrane passes span 187 to 207 (FLGFVVFSYFVVIHVAGFLLV) and 260 to 280 (GLLLLFIGQILAGNTLYPLFL). Over 281–317 (RLLIWFLGKVTKLRELKLMIKNPEELQYDYLLPKLPT) the chain is Cytoplasmic. 2 helical membrane passes run 318 to 338 (AFLASTVIGLMASLVTLFGAV) and 372 to 392 (IDCSLIAPAVLVLFIILMYLP). The Cytoplasmic segment spans residues 393 to 418 (PSTTFALSNGDEKTANKKAKRKLGLV). Transmembrane regions (helical) follow at residues 419–439 (VQNLAFSQLACISVFVIVAFI) and 494–514 (SLSGWWSDEGKLLLVFVMLYG). Residues 515–530 (RLKAFTKGTGEYWRLW) lie on the Cytoplasmic side of the membrane.

This sequence belongs to the TrkH potassium transport family. HKT (TC 2.A.38.3) subfamily. As to expression, expressed in epidermis and vascular tissue of endodermis in roots, and in cells surrounding the vasculature in leaves.

It is found in the membrane. It carries out the reaction Na(+)(in) = Na(+)(out). Functionally, seems to be involved in regulation of potassium-sodium homeostasis. Seems to act as a high-affinity sodium transporter, which mediates increased sodium uptake in roots under potassium deficiency and contributes to sodium accumulation and salt toxicity. Involved in nutritional sodium uptake and distribution in potassium-starved roots to allow plant growth. May also act as a potassium transporter. Functions as a sodium-potassium cotransporter. This chain is Cation transporter HKT2;1, found in Oryza sativa subsp. indica (Rice).